A 293-amino-acid chain; its full sequence is Aspartate carbamoyltransferase catalytic subunit (293 aa).

The carbamoyl phosphate site is built by Arg-50 and Thr-51. An L-aspartate-binding site is contributed by Lys-78. The carbamoyl phosphate site is built by Arg-100, His-127, and Gln-130. L-aspartate is bound by residues Arg-160 and Arg-210. Ala-253 and Pro-254 together coordinate carbamoyl phosphate.

Belongs to the aspartate/ornithine carbamoyltransferase superfamily. ATCase family. Heterododecamer (2C3:3R2) of six catalytic PyrB chains organized as two trimers (C3), and six regulatory PyrI chains organized as three dimers (R2).

It carries out the reaction carbamoyl phosphate + L-aspartate = N-carbamoyl-L-aspartate + phosphate + H(+). It functions in the pathway pyrimidine metabolism; UMP biosynthesis via de novo pathway; (S)-dihydroorotate from bicarbonate: step 2/3. Its function is as follows. Catalyzes the condensation of carbamoyl phosphate and aspartate to form carbamoyl aspartate and inorganic phosphate, the committed step in the de novo pyrimidine nucleotide biosynthesis pathway. The sequence is that of Aspartate carbamoyltransferase catalytic subunit from Staphylococcus aureus (strain USA300).